The chain runs to 72 residues: Large ribosomal subunit protein bL31 (72 aa).

Cys17, Cys19, Cys37, and Cys40 together coordinate Zn(2+).

This sequence belongs to the bacterial ribosomal protein bL31 family. Type A subfamily. Part of the 50S ribosomal subunit. Requires Zn(2+) as cofactor.

In terms of biological role, binds the 23S rRNA. In Clostridium botulinum (strain ATCC 19397 / Type A), this protein is Large ribosomal subunit protein bL31.